Here is a 294-residue protein sequence, read N- to C-terminus: Protein huluwa (294 aa).

At 1–23 (MSQLGSAVPSSNLPEGLPVSSLA) the chain is on the extracellular side. Residues 24–44 (LLILVLIPCVLLLLLLNCLFV) traverse the membrane as a helical segment. Residues 45–294 (GYKLFRMTRR…PPITTKQYWV (250 aa)) are Cytoplasmic-facing. Residues 154-175 (SDSDMERVNTVPPNSPVLRVTP) form a disordered region. Positions 164 to 169 (VPPNSP) match the VPPNSP motif motif. An SLRRSST motif motif is present at residues 184 to 190 (SLRRSST).

This sequence belongs to the huluwa family. Interacts with axin1; leading to promote the tankyrase-mediated degradation of axin. Interacts with axin2; leading to promote the tankyrase-mediated degradation of axin.

It is found in the cell membrane. In terms of biological role, key maternal determinant of the dorsal organizer and body axis formation in vertebrates that acts by promoting stabilization of beta-catenin (ctnnb1). Localizes on the plasma membrane of the future dorsal blastomeres in early blastulas and binds to and promotes the tankyrase-mediated degradation of axin (axin1 and axin2). Axin degradation results in stabilization and nuclear translocation of beta-catenin (ctnnb1) for activating organizer-specific target gene expression. This is Protein huluwa from Danio rerio (Zebrafish).